A 330-amino-acid chain; its full sequence is MIKISYSPYTLKPVQSLNAATAATAREGVLLKVEWNDGLYGFADLHPWPELGDLSLEEQLSDLRMGRMTTQIEQSIWLARRDALLRKEKKHVFDGGEKIKNNYLLSHFQDLKPGFLDGLKNEGYNTVKVKMGRDLQKEADMLTHIAASGMRMRLDFNALGSWQTFEKFMVNLPLTVRPLIEYVEDPFPFDFHAWGEARKLAKIALDNQYDKVPWGKIASAPFDVIVIKPAKTDVDKAVAQCQKWNLKLAVTSYMDHPVGVVHAVGVAMELKDKYGDMILESGCLTHRLYQMDSFAAELSTQGPYLLKNKGTGVGFDKLLEALTWYQLKVR.

Lys-130 serves as the catalytic Proton donor. The Mg(2+) site is built by Asp-155, Glu-184, and Asp-206. Lys-228 (proton acceptor) is an active-site residue.

The protein belongs to the mandelate racemase/muconate lactonizing enzyme family. MenC type 1 subfamily. Monomer. A divalent metal cation serves as cofactor.

It catalyses the reaction (1R,6R)-6-hydroxy-2-succinyl-cyclohexa-2,4-diene-1-carboxylate = 2-succinylbenzoate + H2O. The protein operates within quinol/quinone metabolism; 1,4-dihydroxy-2-naphthoate biosynthesis; 1,4-dihydroxy-2-naphthoate from chorismate: step 4/7. It functions in the pathway cofactor biosynthesis; phylloquinone biosynthesis. In terms of biological role, converts 2-succinyl-6-hydroxy-2,4-cyclohexadiene-1-carboxylate (SHCHC) to 2-succinylbenzoate (OSB). Does not show N-succinylamino acid racemase (NSAR) activity with N-succinyl-L-phenylglycine as substrate. The protein is o-succinylbenzoate synthase of Bdellovibrio bacteriovorus (strain ATCC 15356 / DSM 50701 / NCIMB 9529 / HD100).